A 129-amino-acid chain; its full sequence is Small ribosomal subunit protein uS12 (129 aa).

The tract at residues 1–25 is disordered; the sequence is MPTYNQLVRFGRKSKTRKTKSPALE. Residues 10–20 show a composition bias toward basic residues; the sequence is FGRKSKTRKTK. Aspartate 89 carries the 3-methylthioaspartic acid modification. Residues 110–129 form a disordered region; the sequence is RKQGRSRYGAPSKQVAVTKK.

Belongs to the universal ribosomal protein uS12 family. Part of the 30S ribosomal subunit. Contacts proteins S8 and S17. May interact with IF1 in the 30S initiation complex.

Its function is as follows. With S4 and S5 plays an important role in translational accuracy. In terms of biological role, interacts with and stabilizes bases of the 16S rRNA that are involved in tRNA selection in the A site and with the mRNA backbone. Located at the interface of the 30S and 50S subunits, it traverses the body of the 30S subunit contacting proteins on the other side and probably holding the rRNA structure together. The combined cluster of proteins S8, S12 and S17 appears to hold together the shoulder and platform of the 30S subunit. This is Small ribosomal subunit protein uS12 from Rickettsia canadensis (strain McKiel).